Here is a 249-residue protein sequence, read N- to C-terminus: 3alpha-hydroxy bile acid-CoA-ester 3-dehydrogenase 2 (249 aa).

NAD(+)-binding positions include 15 to 18, glutamate 38, glutamate 42, and asparagine 92; that span reads TRGI. Serine 144 is a substrate binding site. Active-site proton donor/acceptor residues include tyrosine 157 and lysine 161. NAD(+) contacts are provided by residues lysine 161 and 190–192; that span reads VNT.

It belongs to the short-chain dehydrogenases/reductases (SDR) family. As to quaternary structure, homotetramer.

It carries out the reaction a 3alpha-hydroxy bile acid CoA + NAD(+) = a 3-oxo bile acid CoA + NADH + H(+). The catalysed reaction is choloyl-CoA + NAD(+) = 7alpha,12alpha-dihydroxy-3-oxochol-24-oyl-CoA + NADH + H(+). The enzyme catalyses chenodeoxycholoyl-CoA + NAD(+) = 7alpha-hydroxy-3-oxochol-24-oyl-CoA + NADH + H(+). It catalyses the reaction deoxycholoyl-CoA + NAD(+) = 12alpha-hydroxy-3-oxocholan-24-oyl-CoA + NADH + H(+). It carries out the reaction lithocholoyl-CoA + NAD(+) = 3-oxocholan-24-oyl-CoA + NADH + H(+). It participates in lipid metabolism; bile acid biosynthesis. In terms of biological role, involved in the multi-step bile acid 7alpha-dehydroxylation pathway that transforms primary bile acids to secondary bile acids in the human gut. Catalyzes the oxidation of C3-hydroxyl group of CoA conjugated bile acids generating a C3-oxo bile acid intermediate. Can use choloyl-CoA, chenodeoxycholoyl-CoA, deoxycholoyl-CoA, and lithocholoyl-CoA as substrates with similar efficiency. Highly prefers NAD over NADP as cosubstrate. Also catalyzes the reverse reactions; in vitro, the preferred direction of reaction depends on the pH. Has very little activity with unconjugated (non-CoA) bile acid substrates. The sequence is that of 3alpha-hydroxy bile acid-CoA-ester 3-dehydrogenase 2 (baiA2) from Clostridium scindens (strain JCM 10418 / VPI 12708).